We begin with the raw amino-acid sequence, 592 residues long: MAPSQLALFSVSDKTGLVEFARSLASLGLSLVASGGTAKAIRDAGLAVRDVSELTGFPEMLGGRVKTLHPAVHAGILARNIPEDAADMARLDFNLVRVVVCNLYPFVKTVASPDVTVEAAVEQIDIGGVTLLRAAAKNHARVTVVCEPEDYAGVAAEMHGSDSKDTSLETRRHLALKAFTHTAQYDEAISDYFRKQYSKGISQMPLRYGMNPHQTPAQLYTLKPKLPITVLNGAPGFINLCDALNAWQLVTELRGAVDIPAAASFKHVSPAGAAVGVPLSEDEARVCMVYDLYPTLTPLAVAYARARGADRMSSFGDFVALSDICDVPTAKIISREVSDGIVAPGYEEEALKILSKKKNGNYCVLQMDQSYKPDENEVRTLFGLRLSQKRNNGVVDKSLFSNIVTKNKDLPESALRDLIVATVAVKYTQSNSVCYAKDGQVIGIGAGQQSRIHCTRLAGDKANSWWLRHHPRVLSMKFKAGVKRAEISNAIDQYVTGTIGEGEDLVKWEALFEEVPELLTEAEKKEWVDKLSGVSVSSDAFFPFRDNVDRAKRSGVAYIVAPSGSTADKVVIEACDELGIVLAHTDLRLFHH.

Residue Met-1 is modified to N-acetylmethionine. The region spanning 1–146 (MAPSQLALFS…KNHARVTVVC (146 aa)) is the MGS-like domain. An IMP cyclohydrolase region spans residues 1–198 (MAPSQLALFS…ISDYFRKQYS (198 aa)). IMP-binding positions include 12–14 (SDK), 34–37 (SGGT), 64–67 (RVKT), 101–102 (CN), and 125–126 (DI). Catalysis depends on Lys-137, which acts as the Proton donor/acceptor; for FAICAR cyclization activity. An N6-acetyllysine modification is found at Lys-199. The AICAR formyltransferase stretch occupies residues 199–592 (KGISQMPLRY…AHTDLRLFHH (394 aa)). 5-amino-1-(5-phospho-beta-D-ribosyl)imidazole-4-carboxamide-binding positions include 207–208 (RY), His-267, Gly-316, Asp-339, Asn-431, and Arg-451. The active-site Proton acceptor; for AICAR formyltransferase activity is the His-267. Residue Ile-452 coordinates (6R)-10-formyltetrahydrofolate. Phe-541 is a binding site for 5-amino-1-(5-phospho-beta-D-ribosyl)imidazole-4-carboxamide. Residues Asp-546 and 565 to 566 (ST) each bind (6R)-10-formyltetrahydrofolate. 5-amino-1-(5-phospho-beta-D-ribosyl)imidazole-4-carboxamide is bound at residue Arg-588.

The protein belongs to the PurH family. Homodimer. Associates with internalized INSR complexes on Golgi/endosomal membranes. Interacts with INSR; ATIC together with PRKAA2/AMPK2 and HACD3/PTPLAD1 is proposed to be part of a signaling network regulating INSR autophosphorylation and endocytosis.

It is found in the cytoplasm. It localises to the cytosol. The catalysed reaction is (6R)-10-formyltetrahydrofolate + 5-amino-1-(5-phospho-beta-D-ribosyl)imidazole-4-carboxamide = 5-formamido-1-(5-phospho-D-ribosyl)imidazole-4-carboxamide + (6S)-5,6,7,8-tetrahydrofolate. It carries out the reaction 10-formyldihydrofolate + 5-amino-1-(5-phospho-beta-D-ribosyl)imidazole-4-carboxamide = 5-formamido-1-(5-phospho-D-ribosyl)imidazole-4-carboxamide + 7,8-dihydrofolate. The enzyme catalyses IMP + H2O = 5-formamido-1-(5-phospho-D-ribosyl)imidazole-4-carboxamide. It participates in purine metabolism; IMP biosynthesis via de novo pathway; 5-formamido-1-(5-phospho-D-ribosyl)imidazole-4-carboxamide from 5-amino-1-(5-phospho-D-ribosyl)imidazole-4-carboxamide (10-formyl THF route): step 1/1. The protein operates within purine metabolism; IMP biosynthesis via de novo pathway; IMP from 5-formamido-1-(5-phospho-D-ribosyl)imidazole-4-carboxamide: step 1/1. With respect to regulation, AMP and XMP inhibit AICAR formyltransferase activity. AICAR formyltransferase activity is inhibited by N-(6-fluoro-1-oxo-1,2-dihydroisoquinolin-7-yl)-5- [(3R)-3-hydroxypyrrolidin-1-yl]thiophene-2-sulfonamide (LSN 3213128), which acts as a tumor suppression in cancer cell lines. Its function is as follows. Bifunctional enzyme that catalyzes the last two steps of purine biosynthesis. Acts as a transformylase that incorporates a formyl group to the AMP analog AICAR (5-amino-1-(5-phospho-beta-D-ribosyl)imidazole-4-carboxamide) to produce the intermediate formyl-AICAR (FAICAR). Also displays cyclohydrolase activity involving the cyclization of FAICAR to inosine monophosphate (IMP). Can use both 10-formyldihydrofolate and 10-formyltetrahydrofolate as the formyl donor in this reaction. Also catalyzes the cyclization of FAICAR to IMP. Promotes insulin receptor/INSR autophosphorylation and is involved in INSR internalization. This Mus musculus (Mouse) protein is Bifunctional purine biosynthesis protein ATIC (Atic).